Consider the following 436-residue polypeptide: Trigger factor (436 aa).

The 86-residue stretch at 161–246 (GMRVTMDFVG…LNKVEEQILP (86 aa)) folds into the PPIase FKBP-type domain.

Belongs to the FKBP-type PPIase family. Tig subfamily.

It is found in the cytoplasm. It carries out the reaction [protein]-peptidylproline (omega=180) = [protein]-peptidylproline (omega=0). Functionally, involved in protein export. Acts as a chaperone by maintaining the newly synthesized protein in an open conformation. Functions as a peptidyl-prolyl cis-trans isomerase. The polypeptide is Trigger factor (Aeromonas hydrophila subsp. hydrophila (strain ATCC 7966 / DSM 30187 / BCRC 13018 / CCUG 14551 / JCM 1027 / KCTC 2358 / NCIMB 9240 / NCTC 8049)).